The primary structure comprises 117 residues: MAYGLPRRNTVQTILKGSCYKVQEPWDLAELTKTWYTNLTNIRLPFLGEIVFGSPMNLLASQTKQECQFPSMQSMALEKEYEAKRLTKLKCQENVCKEIQASLREKKVGLRRPLQPK.

This is an uncharacterized protein from Mus musculus (Mouse).